The primary structure comprises 1039 residues: Translation initiation factor IF-2 (1039 aa).

Disordered stretches follow at residues 39 to 347 and 400 to 452; these read TISE…KWQE and ARPP…PEKV. Over residues 103–125 the composition is skewed to polar residues; sequence RNTTSNAPEASVANNQIASSEAN. A compositionally biased stretch (low complexity) spans 157–176; that stretch reads PQKPAAPEAEPEAQSQAPAK. 2 stretches are compositionally biased toward basic and acidic residues: residues 178–197 and 226–243; these read AVEK…ERQP and PILK…DQAK. Residues 408 to 423 show a composition bias toward low complexity; it reads ARSASAATAAPISSPT. A compositionally biased stretch (basic and acidic residues) spans 432–451; sequence NNRDQNRRQETEVKRERPEK. The region spanning 533–706 is the tr-type G domain; that stretch reads RRPPVVTIMG…LLVAEVGELS (174 aa). A G1 region spans residues 542–549; it reads GHVDHGKT. 542-549 lines the GTP pocket; it reads GHVDHGKT. The segment at 567–571 is G2; sequence GITQH. The segment at 592–595 is G3; it reads DTPG. GTP contacts are provided by residues 592-596 and 646-649; these read DTPGH and NKID. Residues 646–649 are G4; it reads NKID. Positions 682 to 684 are G5; it reads SAI.

It belongs to the TRAFAC class translation factor GTPase superfamily. Classic translation factor GTPase family. IF-2 subfamily.

The protein localises to the cytoplasm. In terms of biological role, one of the essential components for the initiation of protein synthesis. Protects formylmethionyl-tRNA from spontaneous hydrolysis and promotes its binding to the 30S ribosomal subunits. Also involved in the hydrolysis of GTP during the formation of the 70S ribosomal complex. This Nostoc sp. (strain PCC 7120 / SAG 25.82 / UTEX 2576) protein is Translation initiation factor IF-2.